The following is a 261-amino-acid chain: Carnitinyl-CoA dehydratase (261 aa).

Glu111 serves as the catalytic Nucleophile. The active-site Proton acceptor is Glu131.

This sequence belongs to the enoyl-CoA hydratase/isomerase family.

It catalyses the reaction (R)-carnitinyl-CoA = crotonobetainyl-CoA + H2O. Its pathway is amine and polyamine metabolism; carnitine metabolism. Its function is as follows. Catalyzes the reversible dehydration of L-carnitinyl-CoA to crotonobetainyl-CoA. This chain is Carnitinyl-CoA dehydratase, found in Salmonella arizonae (strain ATCC BAA-731 / CDC346-86 / RSK2980).